A 157-amino-acid chain; its full sequence is MLKTTKKSLLVFMGVFFLIFGVDQAIKYAILEGFRYESLMIDIVLVFNKGVAFSLLSFLEGGLKYLQILLILGLFIFLMRQRELFKNHAIEFGMVFGAGVSNVLDRFVHGGVVDYVYYHYGFDFAIFNFADVMIDVGVGVLLLKQFFFKQKQNKIKA.

The next 3 helical transmembrane spans lie at 10-30, 58-78, and 84-104; these read LVFMGVFFLIFGVDQAIKYAI, FLEGGLKYLQILLILGLFIFL, and LFKNHAIEFGMVFGAGVSNVL. Active-site residues include Asp-114 and Asp-131. Residues 122 to 142 traverse the membrane as a helical segment; the sequence is FDFAIFNFADVMIDVGVGVLL.

Belongs to the peptidase A8 family.

Its subcellular location is the cell inner membrane. The catalysed reaction is Release of signal peptides from bacterial membrane prolipoproteins. Hydrolyzes -Xaa-Yaa-Zaa-|-(S,diacylglyceryl)Cys-, in which Xaa is hydrophobic (preferably Leu), and Yaa (Ala or Ser) and Zaa (Gly or Ala) have small, neutral side chains.. The protein operates within protein modification; lipoprotein biosynthesis (signal peptide cleavage). Functionally, this protein specifically catalyzes the removal of signal peptides from prolipoproteins. This Helicobacter pylori (strain ATCC 700392 / 26695) (Campylobacter pylori) protein is Lipoprotein signal peptidase.